The primary structure comprises 184 residues: Casparian strip membrane protein 3 (184 aa).

At M1–S24 the chain is on the cytoplasmic side. A helical membrane pass occupies residues I25–M45. Over G46–T72 the chain is Extracellular. N49 is a glycosylation site (N-linked (GlcNAc...) asparagine). Residues F73–I93 form a helical membrane-spanning segment. At V94 to R105 the chain is on the cytoplasmic side. Residues L106–A126 form a helical membrane-spanning segment. Residues A127–S159 are Extracellular-facing. A helical membrane pass occupies residues L160–A180. Residues L181 to R184 lie on the Cytoplasmic side of the membrane.

The protein belongs to the Casparian strip membrane proteins (CASP) family. In terms of assembly, homodimer and heterodimers.

It is found in the cell membrane. In terms of biological role, regulates membrane-cell wall junctions and localized cell wall deposition. Required for establishment of the Casparian strip membrane domain (CSD) and the subsequent formation of Casparian strips, a cell wall modification of the root endodermis that determines an apoplastic barrier between the intraorganismal apoplasm and the extraorganismal apoplasm and prevents lateral diffusion. The chain is Casparian strip membrane protein 3 from Oryza sativa subsp. indica (Rice).